A 187-amino-acid polypeptide reads, in one-letter code: Protein GrpE (187 aa).

Residues 1-17 are compositionally biased toward low complexity; it reads MSNEEQQQPNPAAQAPE. The interval 1–27 is disordered; that stretch reads MSNEEQQQPNPAAQAPEGAVTEGAAPE.

The protein belongs to the GrpE family. In terms of assembly, homodimer.

It localises to the cytoplasm. Functionally, participates actively in the response to hyperosmotic and heat shock by preventing the aggregation of stress-denatured proteins, in association with DnaK and GrpE. It is the nucleotide exchange factor for DnaK and may function as a thermosensor. Unfolded proteins bind initially to DnaJ; upon interaction with the DnaJ-bound protein, DnaK hydrolyzes its bound ATP, resulting in the formation of a stable complex. GrpE releases ADP from DnaK; ATP binding to DnaK triggers the release of the substrate protein, thus completing the reaction cycle. Several rounds of ATP-dependent interactions between DnaJ, DnaK and GrpE are required for fully efficient folding. In Thioalkalivibrio sulfidiphilus (strain HL-EbGR7), this protein is Protein GrpE.